Reading from the N-terminus, the 1611-residue chain is DNA (cytosine-5)-methyltransferase 1 (1611 aa).

Residues 1–120 are interaction with DMAP1; that stretch reads MPARTAPARV…SQTSGEDCRV (120 aa). Positions 1-148 are interaction with DNMT3A; sequence MPARTAPARV…RRSKSDGETK (148 aa). Interaction with the PRC2/EED-EZH2 complex stretches follow at residues 1–334 and 306–603; these read MPAR…TEKK and KPQV…TIRQ. Ser-15 is modified (phosphoserine). One can recognise a DMAP1-binding domain in the interval 16-109; it reads RAFSLPDDVR…SREANGCLEN (94 aa). An N6,N6-dimethyllysine; by EHMT2 modification is found at Lys-70. Residues 123–328 form a disordered region; it reads AEKGKPPKPV…EEKRRRTTYR (206 aa). At Ser-133 the chain carries Phosphoserine. Thr-137 is modified (phosphothreonine). A Phosphoserine modification is found at Ser-141. Lys-142 is modified (N6-methyllysine; by SETD7). The residue at position 143 (Ser-143) is a Phosphoserine; by PKB/AKT1. Positions 149-216 are interaction with DNMT3B; the sequence is SEVSSSPRIT…TSRERVAGLL (68 aa). 2 positions are modified to phosphoserine: Ser-152 and Ser-154. Lys-160 is modified (N6-acetyllysine). Residues 163–174 form an interaction with PCNA region; that stretch reads RQTTITSHFPRG. The span at 163–174 shows a compositional bias: low complexity; sequence RQTTITSHFPRG. Thr-166 is subject to Phosphothreonine. Residues 177 to 204 carry the Nuclear localization signal motif; that stretch reads KRKPEEEPEKVKSDDSVDEEKDQEEKRR. 5 stretches are compositionally biased toward basic and acidic residues: residues 178–191, 199–212, 220–265, 279–311, and 319–328; these read RKPE…KSDD, QEEK…RERV, EPGR…RDVR, KDEK…QVSD, and EEKRRRTTYR. Position 188 is an N6-acetyllysine (Lys-188). An N6-acetyllysine; alternate modification is found at Lys-257. Lys-257 participates in a covalent cross-link: Glycyl lysine isopeptide (Lys-Gly) (interchain with G-Cter in SUMO2); alternate. Ser-310 is modified (phosphoserine). Residues 329-548 are DNA replication foci-targeting sequence; sequence ELTEKKMTRT…NLNRFTEDSL (220 aa). Residues Cys-351 and Cys-354 each contribute to the Zn(2+) site. Phosphoserine is present on residues Ser-392 and Ser-396. 2 residues coordinate Zn(2+): Cys-412 and His-416. A phosphoserine mark is found at Ser-507 and Ser-547. The segment at 594–614 is disordered; sequence RAERRQTIRQPAKEKDKGPTK. The CXXC-type zinc finger occupies 643–689; the sequence is NAFKRRRCGVCEICQQPECGKCKACKDMVKFGGSGRSKQACQKRRCP. The Zn(2+) site is built by Cys-650, Cys-653, Cys-656, Cys-661, Cys-664, Cys-667, Cys-683, and Cys-688. The tract at residues 690–751 is autoinhibitory linker; it reads NMAMKEADDD…SYYKKVCIDS (62 aa). The tract at residues 695-726 is disordered; the sequence is EADDDEEVDDNIPEMPSPKKMHQGKKKKQNKN. Over residues 696-706 the composition is skewed to acidic residues; it reads ADDDEEVDDNI. Ser-711 is modified (phosphoserine). The span at 713 to 725 shows a compositional bias: basic residues; that stretch reads KKMHQGKKKKQNK. At Ser-729 the chain carries Phosphoserine. At Lys-746 the chain carries N6-acetyllysine. A BAH 1 domain is found at 752–877; that stretch reads ETLEVGDCVS…QDYARFESPP (126 aa). At Ser-875 the chain carries Phosphoserine. An N6-acetyllysine mark is found at Lys-888, Lys-954, Lys-958, Lys-972, and Lys-1051. Residues 969 to 1097 enclose the BAH 2 domain; the sequence is HYRKYSDYIK…AKSKSFEDPP (129 aa). A disordered region spans residues 1091-1126; it reads KSFEDPPNHARSTGNKGKGKGKGKNRTKSQTCEPSE. A run of 4 repeats spans residues 1106 to 1107, 1108 to 1109, 1110 to 1111, and 1112 to 1113. The interval 1106–1115 is 5 X 2 AA tandem repeats of K-G; sequence KGKGKGKGKN. Residues 1107–1117 show a composition bias toward basic residues; it reads GKGKGKGKNRT. N6-acetyllysine occurs at positions 1108, 1110, 1112, 1114, and 1118. The stretch at 1114 to 1115 is one 5; approximate repeat; it reads KN. Positions 1118-1611 are interaction with the PRC2/EED-EZH2 complex; the sequence is KSQTCEPSEL…AKIKEEAAKD (494 aa). The 460-residue stretch at 1136–1595 folds into the SAM-dependent MTase C5-type domain; sequence LRTLDVFSGC…LEIKRCMLAK (460 aa). Residues 1136–1611 are catalytic; that stretch reads LRTLDVFSGC…AKIKEEAAKD (476 aa). S-adenosyl-L-methionine-binding positions include Ser-1143, 1147-1148, 1165-1166, 1187-1188, and Cys-1188; these read GL, EM, and DC. Cys-1223 is a catalytic residue. N6-acetyllysine is present on residues Lys-1346 and Lys-1412. Residues Asn-1574 and Val-1576 each coordinate S-adenosyl-L-methionine. Lys-1605 is covalently cross-linked (Glycyl lysine isopeptide (Lys-Gly) (interchain with G-Cter in SUMO2)).

The protein belongs to the class I-like SAM-binding methyltransferase superfamily. C5-methyltransferase family. In terms of assembly, homodimer. Forms a stable complex with E2F1, BB1 and HDAC1. Forms a complex with DMAP1 and HDAC2, with direct interaction. Interacts with the PRC2/EED-EZH2 complex. Probably part of a corepressor complex containing ZNF304, TRIM28, SETDB1 and DNMT1. Interacts with UHRF1; promoting its recruitment to hemimethylated DNA. Interacts with USP7, promoting its deubiquitination. Interacts with PCNA. Interacts with MBD2 and MBD3. Interacts with DNMT3A and DNMT3B. Interacts with UBC9. Interacts with CSNK1D. Interacts with HDAC1. Interacts with BAZ2A/TIP5. Interacts with SIRT7. Interacts with ZNF263; recruited to the SIX3 promoter along with other proteins involved in chromatin modification and transcriptional corepression where it contributes to transcriptional repression. Interacts with L3MBTL3 and DCAF5; the interaction requires DNMT1 methylation at Lys-142 and is necessary to target DNMT1 for ubiquitination by the CRL4-DCAF5 E3 ubiquitin ligase complex and proteasomal degradation. Interacts with PHF20L1; the interaction requires DNMT1 methylation at Lys-142 and protects DNMT1 from ubiquitination and proteasomal degradation. Post-translationally, sumoylated; sumoylation increases activity. In terms of processing, acetylation on multiple lysines, mainly by KAT2B/PCAF, regulates cell cycle G(2)/M transition. Deacetylation of Lys-1346 and Lys-1412 by SIRT1 increases methyltransferase activity. Phosphorylation of Ser-154 by CDKs is important for enzymatic activity and protein stability. Phosphorylation of Ser-143 by AKT1 prevents methylation by SETD7 thereby increasing DNMT1 stability. Post-translationally, methylation at Lys-142 by SETD7 is necessary for the regulation of DNMT1 proteasomal degradation. In terms of processing, ubiquitinated by UHRF1; interaction with USP7 counteracts ubiquitination by UHRF1 by promoting deubiquitination and preventing degradation by the proteasome.

The protein resides in the nucleus. The catalysed reaction is a 2'-deoxycytidine in DNA + S-adenosyl-L-methionine = a 5-methyl-2'-deoxycytidine in DNA + S-adenosyl-L-homocysteine + H(+). In terms of biological role, methylates CpG residues. Preferentially methylates hemimethylated DNA. Associates with DNA replication sites in S phase maintaining the methylation pattern in the newly synthesized strand, that is essential for epigenetic inheritance. Associates with chromatin during G2 and M phases to maintain DNA methylation independently of replication. It is responsible for maintaining methylation patterns established in development. DNA methylation is coordinated with methylation of histones. Mediates transcriptional repression by direct binding to HDAC2. In association with DNMT3B and via the recruitment of CTCFL/BORIS, involved in activation of BAG1 gene expression by modulating dimethylation of promoter histone H3 at H3K4 and H3K9. Probably forms a corepressor complex required for activated KRAS-mediated promoter hypermethylation and transcriptional silencing of tumor suppressor genes (TSGs) or other tumor-related genes in colorectal cancer (CRC) cells. Also required to maintain a transcriptionally repressive state of genes in undifferentiated embryonic stem cells (ESCs). Associates at promoter regions of tumor suppressor genes (TSGs) leading to their gene silencing. Promotes tumor growth. The sequence is that of DNA (cytosine-5)-methyltransferase 1 (DNMT1) from Bos taurus (Bovine).